The primary structure comprises 360 residues: tRNA-specific 2-thiouridylase MnmA (360 aa).

ATP contacts are provided by residues 9-16 (AMSGGVDS) and leucine 35. Cysteine 104 (nucleophile) is an active-site residue. Cysteine 104 and cysteine 197 are joined by a disulfide. Glycine 128 provides a ligand contact to ATP. An interaction with tRNA region spans residues 147–149 (KDQ). Cysteine 197 functions as the Cysteine persulfide intermediate in the catalytic mechanism.

Belongs to the MnmA/TRMU family.

The protein resides in the cytoplasm. The enzyme catalyses S-sulfanyl-L-cysteinyl-[protein] + uridine(34) in tRNA + AH2 + ATP = 2-thiouridine(34) in tRNA + L-cysteinyl-[protein] + A + AMP + diphosphate + H(+). In terms of biological role, catalyzes the 2-thiolation of uridine at the wobble position (U34) of tRNA, leading to the formation of s(2)U34. The sequence is that of tRNA-specific 2-thiouridylase MnmA from Salinispora tropica (strain ATCC BAA-916 / DSM 44818 / JCM 13857 / NBRC 105044 / CNB-440).